The primary structure comprises 455 residues: Kynurenine 3-monooxygenase (455 aa).

Transmembrane regions (helical) follow at residues 393-416 (WLFR…SMPY) and 429-453 (LLWR…YWQR).

Belongs to the aromatic-ring hydroxylase family. KMO subfamily. FAD serves as cofactor.

The protein localises to the mitochondrion. It localises to the membrane. It catalyses the reaction L-kynurenine + NADPH + O2 + H(+) = 3-hydroxy-L-kynurenine + NADP(+) + H2O. It participates in cofactor biosynthesis; NAD(+) biosynthesis; quinolinate from L-kynurenine: step 1/3. Catalyzes the hydroxylation of L-kynurenine (L-Kyn) to form 3-hydroxy-L-kynurenine (L-3OHKyn). Required for synthesis of quinolinic acid. The sequence is that of Kynurenine 3-monooxygenase from Drosophila willistoni (Fruit fly).